The following is a 74-amino-acid chain: Small heat shock protein hspG10 (74 aa).

The 44-residue stretch at 31 to 74 (KTIIDILPSMDVTMTNDKLIIETELAGISKDHIEIDIKDSILTI) folds into the sHSP domain.

It belongs to the small heat shock protein (HSP20) family.

This is Small heat shock protein hspG10 (hspG10) from Dictyostelium discoideum (Social amoeba).